We begin with the raw amino-acid sequence, 913 residues long: DNA polymerase (913 aa).

Residues 182 to 401 (PLIIASWDIE…AYARKDTDLP (220 aa)) form a contains conserved residues essential for 3' -&gt; 5' exonuclease activities region.

The protein belongs to the DNA polymerase type-B family.

The catalysed reaction is DNA(n) + a 2'-deoxyribonucleoside 5'-triphosphate = DNA(n+1) + diphosphate. In addition to polymerase activity, this DNA polymerase potentially exhibits 3' to 5' exonuclease activity. In Chlorella (PBCV-NY2A), this protein is DNA polymerase (DPO).